A 279-amino-acid chain; its full sequence is Pantothenate synthetase (279 aa).

ATP is bound at residue 26-33; sequence MGGLHEGH. The active-site Proton donor is His-33. Gln-57 is a (R)-pantoate binding site. Gln-57 contacts beta-alanine. 143-146 is a binding site for ATP; it reads GKKD. Residue Gln-149 participates in (R)-pantoate binding. Residues Val-172 and 180-183 contribute to the ATP site; that span reads LSSR.

The protein belongs to the pantothenate synthetase family. In terms of assembly, homodimer.

It is found in the cytoplasm. It carries out the reaction (R)-pantoate + beta-alanine + ATP = (R)-pantothenate + AMP + diphosphate + H(+). It functions in the pathway cofactor biosynthesis; (R)-pantothenate biosynthesis; (R)-pantothenate from (R)-pantoate and beta-alanine: step 1/1. Functionally, catalyzes the condensation of pantoate with beta-alanine in an ATP-dependent reaction via a pantoyl-adenylate intermediate. This Nitrosospira multiformis (strain ATCC 25196 / NCIMB 11849 / C 71) protein is Pantothenate synthetase.